A 182-amino-acid polypeptide reads, in one-letter code: Ribosome maturation factor RimM (182 aa).

Residues 103 to 182 (VGDYYWKDLI…TIEVDWDPGF (80 aa)) form the PRC barrel domain.

The protein belongs to the RimM family. Binds ribosomal protein uS19.

It is found in the cytoplasm. Functionally, an accessory protein needed during the final step in the assembly of 30S ribosomal subunit, possibly for assembly of the head region. Essential for efficient processing of 16S rRNA. May be needed both before and after RbfA during the maturation of 16S rRNA. It has affinity for free ribosomal 30S subunits but not for 70S ribosomes. The polypeptide is Ribosome maturation factor RimM (Pectobacterium atrosepticum (strain SCRI 1043 / ATCC BAA-672) (Erwinia carotovora subsp. atroseptica)).